Consider the following 500-residue polypeptide: Cytochrome P450 CYP736A12 (500 aa).

A helical membrane pass occupies residues 4 to 24; the sequence is LAYPLLFVLLGALSWWILPII. Heme is bound at residue Cys-442.

It belongs to the cytochrome P450 family. It depends on heme as a cofactor.

It is found in the membrane. Probable heme-thiolate monooxygenase. The chain is Cytochrome P450 CYP736A12 from Panax ginseng (Korean ginseng).